The primary structure comprises 117 residues: Large ribosomal subunit protein bL19 (117 aa).

It belongs to the bacterial ribosomal protein bL19 family.

This protein is located at the 30S-50S ribosomal subunit interface and may play a role in the structure and function of the aminoacyl-tRNA binding site. The chain is Large ribosomal subunit protein bL19 from Proteus mirabilis (strain HI4320).